The following is a 272-amino-acid chain: Tumor necrosis factor receptor superfamily member 4 (272 aa).

Residues Met-1–Gly-19 form the signal peptide. Topologically, residues Val-20–Pro-211 are extracellular. TNFR-Cys repeat units lie at residues Asn-26–His-61 and Pro-62–Cys-103. 8 disulfide bridges follow: Cys-27–Cys-38, Cys-39–Cys-52, Cys-42–Cys-60, Cys-63–Cys-77, Cys-80–Cys-95, Cys-83–Cys-103, Cys-105–Cys-123, and Cys-126–Cys-139. The stretch at Arg-104 to Val-124 is one TNFR-Cys 3; truncated repeat. A TNFR-Cys 4 repeat occupies Pro-125 to Glu-165. N-linked (GlcNAc...) asparagine glycosylation occurs at Asn-144. A disulfide bridge links Cys-145 with Cys-164. Residues Ala-212–Leu-236 form a helical membrane-spanning segment. Residues Arg-237–Ile-272 lie on the Cytoplasmic side of the membrane.

As to quaternary structure, interacts with TRAF2, TRAF3 and TRAF5. Expressed in CD4(+) T-cells and in T-helper Th17 cells (at protein level).

Its subcellular location is the membrane. Functionally, receptor for TNFSF4/OX40L/GP34. Is a costimulatory molecule implicated in long-term T-cell immunity. In Mus musculus (Mouse), this protein is Tumor necrosis factor receptor superfamily member 4 (Tnfrsf4).